The chain runs to 837 residues: Enterin neuropeptides (837 aa).

A signal peptide spans 1–25 (MAKHDVTVMTLLLVVCALHVFDAQG). Residues 26–47 (TDVKLNDGFLRSGIMNIPFQRR) constitute a propeptide that is removed on maturation. A Valine amide modification is found at Val-57. Positions 61 to 134 (SGFQSPVSPS…ENKRFSKENE (74 aa)) are excised as a propeptide. Val-146 carries the post-translational modification Valine amide. Residues 150–178 (MDLSALEKELIAKLKAADLLSPLETEAPG) constitute a propeptide that is removed on maturation. Leu-190 carries the post-translational modification Leucine amide. The propeptide occupies 194-201 (MPVDVFPR). At Val-211 the chain carries Valine amide. Positions 215–234 (SGNGENYFDDLDTFGDISQR) are excised as a propeptide. Residue Val-244 is modified to Valine amide. Residues 248-266 (GNTDFSRNPLARLSQVQNR) constitute a propeptide that is removed on maturation. Val-276 is subject to Valine amide. A propeptide spanning residues 280–285 (SVHNIV) is cleaved from the precursor. A Valine amide modification is found at Val-297. Positions 301 to 325 (DFEDASEGLDEEEGDIDGYSDDLDV) are excised as a propeptide. A valine amide mark is found at Val-336, Val-348, Val-360, Val-372, Val-384, Val-396, Val-408, Val-420, Val-432, Val-444, Val-456, Val-468, Val-480, Val-492, Val-504, Val-516, Val-528, and Val-540. Positions 544–595 (ELGEDEINFLKEVDAADISRQLAEEDEKEAMVSVDDKETLSNEEDASEDDFE) are excised as a propeptide. The segment at 567 to 594 (EEDEKEAMVSVDDKETLSNEEDASEDDF) is disordered. The span at 584–593 (SNEEDASEDD) shows a compositional bias: acidic residues. Residue Glu-598 is modified to Pyrrolidone carboxylic acid (Glu); in form ENl'. Valine amide is present on Val-606. The propeptide occupies 610–627 (DEEGDMGVEMEEEMESEK). Leu-637 is subject to Leucine amide. Gln-641 is subject to Pyrrolidone carboxylic acid. Val-649 is modified (valine amide). Position 653 is a pyrrolidone carboxylic acid (Gln-653). 2 positions are modified to valine amide: Val-661 and Val-673. Position 677 is a pyrrolidone carboxylic acid (Gln-677). Valine amide is present on residues Val-685 and Val-697. A Pyrrolidone carboxylic acid modification is found at Gln-701. At Val-709 the chain carries Valine amide. At Gln-713 the chain carries Pyrrolidone carboxylic acid. Val-721 carries the post-translational modification Valine amide. Pyrrolidone carboxylic acid is present on Gln-725. A Valine amide modification is found at Val-733. The propeptide occupies 734 to 837 (GKRSGAEDID…DSHIMATSST (104 aa)). Residues 772–837 (GQPAAANEEE…DSHIMATSST (66 aa)) form a disordered region. Residues 778–791 (NEEELQQEAAEESE) show a composition bias toward acidic residues.

In terms of tissue distribution, high expression in gut and CNS.

The protein localises to the secreted. Functionally, reduce interneurons B4/5 activity. May play a regulatory role in nonfeeding behaviors. This chain is Enterin neuropeptides (ENPP), found in Aplysia californica (California sea hare).